A 139-amino-acid chain; its full sequence is Large ribosomal subunit protein bL17 (139 aa).

The protein belongs to the bacterial ribosomal protein bL17 family. Part of the 50S ribosomal subunit. Contacts protein L32.

The protein is Large ribosomal subunit protein bL17 of Myxococcus xanthus (strain DK1622).